Consider the following 354-residue polypeptide: Uroporphyrinogen decarboxylase (354 aa).

Residues 28–32, Asp78, Tyr155, Ser210, and His325 each bind substrate; that span reads RQAGR.

The protein belongs to the uroporphyrinogen decarboxylase family. In terms of assembly, homodimer.

The protein localises to the cytoplasm. It catalyses the reaction uroporphyrinogen III + 4 H(+) = coproporphyrinogen III + 4 CO2. The protein operates within porphyrin-containing compound metabolism; protoporphyrin-IX biosynthesis; coproporphyrinogen-III from 5-aminolevulinate: step 4/4. Catalyzes the decarboxylation of four acetate groups of uroporphyrinogen-III to yield coproporphyrinogen-III. The chain is Uroporphyrinogen decarboxylase from Crocosphaera subtropica (strain ATCC 51142 / BH68) (Cyanothece sp. (strain ATCC 51142)).